Reading from the N-terminus, the 184-residue chain is NADH-quinone oxidoreductase subunit B (184 aa).

[4Fe-4S] cluster-binding residues include cysteine 37, cysteine 38, cysteine 103, and cysteine 132.

This sequence belongs to the complex I 20 kDa subunit family. In terms of assembly, NDH-1 is composed of 14 different subunits. Subunits NuoB, C, D, E, F, and G constitute the peripheral sector of the complex. The cofactor is [4Fe-4S] cluster.

The protein localises to the cell membrane. It carries out the reaction a quinone + NADH + 5 H(+)(in) = a quinol + NAD(+) + 4 H(+)(out). Functionally, NDH-1 shuttles electrons from NADH, via FMN and iron-sulfur (Fe-S) centers, to quinones in the respiratory chain. The immediate electron acceptor for the enzyme in this species is believed to be a menaquinone. Couples the redox reaction to proton translocation (for every two electrons transferred, four hydrogen ions are translocated across the cytoplasmic membrane), and thus conserves the redox energy in a proton gradient. The chain is NADH-quinone oxidoreductase subunit B from Rhodococcus opacus (strain B4).